The following is a 382-amino-acid chain: Succinate--CoA ligase [ADP-forming] subunit beta (382 aa).

The 232-residue stretch at 9-240 (KELFLRYGVK…PRDITEFEAY (232 aa)) folds into the ATP-grasp domain. Residues Lys-45, 52 to 54 (GRG), Val-94, and Glu-99 contribute to the ATP site. The Mg(2+) site is built by Asn-193 and Asp-207. Residues Asn-260 and 317 to 319 (GIT) contribute to the substrate site.

It belongs to the succinate/malate CoA ligase beta subunit family. In terms of assembly, heterotetramer of two alpha and two beta subunits. Mg(2+) serves as cofactor.

It catalyses the reaction succinate + ATP + CoA = succinyl-CoA + ADP + phosphate. The enzyme catalyses GTP + succinate + CoA = succinyl-CoA + GDP + phosphate. The protein operates within carbohydrate metabolism; tricarboxylic acid cycle; succinate from succinyl-CoA (ligase route): step 1/1. Its function is as follows. Succinyl-CoA synthetase functions in the citric acid cycle (TCA), coupling the hydrolysis of succinyl-CoA to the synthesis of either ATP or GTP and thus represents the only step of substrate-level phosphorylation in the TCA. The beta subunit provides nucleotide specificity of the enzyme and binds the substrate succinate, while the binding sites for coenzyme A and phosphate are found in the alpha subunit. The polypeptide is Succinate--CoA ligase [ADP-forming] subunit beta (Pyrobaculum islandicum (strain DSM 4184 / JCM 9189 / GEO3)).